Consider the following 417-residue polypeptide: Histidinol-phosphate aminotransferase 1, chloroplastic (417 aa).

A chloroplast-targeting transit peptide spans 1–40 (MGVINVQGSPSFSIHSSESNLRKSRALKKPFCSIRNRVYC). Ala-41 carries the N-acetylalanine modification. An N6-(pyridoxal phosphate)lysine modification is found at Lys-277.

Belongs to the class-II pyridoxal-phosphate-dependent aminotransferase family. Histidinol-phosphate aminotransferase subfamily. Homodimer. The cofactor is pyridoxal 5'-phosphate. As to expression, expressed in both vegetative and reproductive tissues.

Its subcellular location is the plastid. The protein localises to the chloroplast. It catalyses the reaction L-histidinol phosphate + 2-oxoglutarate = 3-(imidazol-4-yl)-2-oxopropyl phosphate + L-glutamate. The protein operates within amino-acid biosynthesis; L-histidine biosynthesis; L-histidine from 5-phospho-alpha-D-ribose 1-diphosphate: step 7/9. This is Histidinol-phosphate aminotransferase 1, chloroplastic (HISN6A) from Arabidopsis thaliana (Mouse-ear cress).